The sequence spans 259 residues: UDP-2,3-diacylglucosamine hydrolase (259 aa).

Mn(2+) contacts are provided by aspartate 8, histidine 10, aspartate 41, asparagine 79, and histidine 114. 79–80 serves as a coordination point for substrate; sequence NR. Substrate-binding residues include aspartate 122, serine 160, asparagine 164, lysine 167, and histidine 195. The Mn(2+) site is built by histidine 195 and histidine 197.

Belongs to the LpxH family. Mn(2+) is required as a cofactor.

Its subcellular location is the cell inner membrane. It catalyses the reaction UDP-2-N,3-O-bis[(3R)-3-hydroxytetradecanoyl]-alpha-D-glucosamine + H2O = 2-N,3-O-bis[(3R)-3-hydroxytetradecanoyl]-alpha-D-glucosaminyl 1-phosphate + UMP + 2 H(+). It functions in the pathway glycolipid biosynthesis; lipid IV(A) biosynthesis; lipid IV(A) from (3R)-3-hydroxytetradecanoyl-[acyl-carrier-protein] and UDP-N-acetyl-alpha-D-glucosamine: step 4/6. Hydrolyzes the pyrophosphate bond of UDP-2,3-diacylglucosamine to yield 2,3-diacylglucosamine 1-phosphate (lipid X) and UMP by catalyzing the attack of water at the alpha-P atom. Involved in the biosynthesis of lipid A, a phosphorylated glycolipid that anchors the lipopolysaccharide to the outer membrane of the cell. The protein is UDP-2,3-diacylglucosamine hydrolase of Edwardsiella ictaluri (strain 93-146).